Here is a 1129-residue protein sequence, read N- to C-terminus: Ubiquitin carboxyl-terminal hydrolase 7 (1129 aa).

Positions 1-20 (MEIETDQSIEAMDTQDTQEV) are disordered. An MATH domain is found at 101 to 222 (ETTFSFTVEN…NNSITLEVHV (122 aa)). The USP domain maps to 241–548 (VGLKNQGATC…NAYMLVYIRQ (308 aa)). The Nucleophile role is filled by Cys-250. The Proton acceptor role is filled by His-490. Ser-1117 is modified (phosphoserine).

Belongs to the peptidase C19 family.

Its subcellular location is the nucleus. The enzyme catalyses Thiol-dependent hydrolysis of ester, thioester, amide, peptide and isopeptide bonds formed by the C-terminal Gly of ubiquitin (a 76-residue protein attached to proteins as an intracellular targeting signal).. Hydrolase that deubiquitinates target proteins. This Drosophila melanogaster (Fruit fly) protein is Ubiquitin carboxyl-terminal hydrolase 7 (Usp7).